The chain runs to 138 residues: Ribosomal RNA large subunit methyltransferase H (138 aa).

Residues Leu-57, Gly-86, and 105–110 (LSPLTF) each bind S-adenosyl-L-methionine.

This sequence belongs to the RNA methyltransferase RlmH family. Homodimer.

The protein localises to the cytoplasm. It carries out the reaction pseudouridine(1915) in 23S rRNA + S-adenosyl-L-methionine = N(3)-methylpseudouridine(1915) in 23S rRNA + S-adenosyl-L-homocysteine + H(+). In terms of biological role, specifically methylates the pseudouridine at position 1915 (m3Psi1915) in 23S rRNA. This Prochlorococcus marinus (strain MIT 9312) protein is Ribosomal RNA large subunit methyltransferase H.